Reading from the N-terminus, the 226-residue chain is Endonuclease NucS (226 aa).

It belongs to the NucS endonuclease family.

The protein resides in the cytoplasm. Cleaves both 3' and 5' ssDNA extremities of branched DNA structures. The protein is Endonuclease NucS of Mycobacterium ulcerans (strain Agy99).